Reading from the N-terminus, the 58-residue chain is Small ribosomal subunit protein bS21 (58 aa).

This sequence belongs to the bacterial ribosomal protein bS21 family.

This chain is Small ribosomal subunit protein bS21, found in Latilactobacillus sakei subsp. sakei (strain 23K) (Lactobacillus sakei subsp. sakei).